We begin with the raw amino-acid sequence, 309 residues long: Ribonuclease Z (309 aa).

Zn(2+)-binding residues include His-63, His-65, Asp-67, His-68, His-141, Asp-212, and His-270. Asp-67 (proton acceptor) is an active-site residue.

This sequence belongs to the RNase Z family. As to quaternary structure, homodimer. Zn(2+) serves as cofactor.

The catalysed reaction is Endonucleolytic cleavage of RNA, removing extra 3' nucleotides from tRNA precursor, generating 3' termini of tRNAs. A 3'-hydroxy group is left at the tRNA terminus and a 5'-phosphoryl group is left at the trailer molecule.. Functionally, zinc phosphodiesterase, which displays some tRNA 3'-processing endonuclease activity. Probably involved in tRNA maturation, by removing a 3'-trailer from precursor tRNA. The sequence is that of Ribonuclease Z from Lactobacillus delbrueckii subsp. bulgaricus (strain ATCC 11842 / DSM 20081 / BCRC 10696 / JCM 1002 / NBRC 13953 / NCIMB 11778 / NCTC 12712 / WDCM 00102 / Lb 14).